The following is a 76-amino-acid chain: ATP synthase subunit 9, mitochondrial (76 aa).

2 helical membrane passes run 14-34 (IATL…VALI) and 52-72 (ILGF…SFLL).

The protein belongs to the ATPase C chain family. As to quaternary structure, F-type ATPases have 2 components, CF(1) - the catalytic core - and CF(0) - the membrane proton channel. CF(1) has five subunits: alpha(3), beta(3), gamma(1), delta(1), epsilon(1). CF(0) has three main subunits: a, b and c.

Its subcellular location is the mitochondrion membrane. In terms of biological role, mitochondrial membrane ATP synthase (F(1)F(0) ATP synthase or Complex V) produces ATP from ADP in the presence of a proton gradient across the membrane which is generated by electron transport complexes of the respiratory chain. F-type ATPases consist of two structural domains, F(1) - containing the extramembraneous catalytic core and F(0) - containing the membrane proton channel, linked together by a central stalk and a peripheral stalk. During catalysis, ATP synthesis in the catalytic domain of F(1) is coupled via a rotary mechanism of the central stalk subunits to proton translocation. Part of the complex F(0) domain. A homomeric c-ring of probably 10 subunits is part of the complex rotary element. This chain is ATP synthase subunit 9, mitochondrial (ATP9), found in Candida albicans (strain SC5314 / ATCC MYA-2876) (Yeast).